A 314-amino-acid polypeptide reads, in one-letter code: Probable manganese-dependent inorganic pyrophosphatase (314 aa).

Mn(2+) is bound by residues His-10, Asp-14, Asp-16, Asp-80, His-102, and Asp-154.

It belongs to the PPase class C family. Mn(2+) is required as a cofactor.

Its subcellular location is the cytoplasm. It catalyses the reaction diphosphate + H2O = 2 phosphate + H(+). The chain is Probable manganese-dependent inorganic pyrophosphatase (ppaC) from Lactococcus lactis subsp. lactis (strain IL1403) (Streptococcus lactis).